We begin with the raw amino-acid sequence, 408 residues long: Arginine biosynthesis bifunctional protein ArgJ (408 aa).

Thr156, Lys182, Thr193, Glu279, Asn403, and Ser408 together coordinate substrate. Thr193 functions as the Nucleophile in the catalytic mechanism.

Belongs to the ArgJ family. In terms of assembly, heterotetramer of two alpha and two beta chains.

The protein resides in the cytoplasm. The catalysed reaction is N(2)-acetyl-L-ornithine + L-glutamate = N-acetyl-L-glutamate + L-ornithine. The enzyme catalyses L-glutamate + acetyl-CoA = N-acetyl-L-glutamate + CoA + H(+). It participates in amino-acid biosynthesis; L-arginine biosynthesis; L-ornithine and N-acetyl-L-glutamate from L-glutamate and N(2)-acetyl-L-ornithine (cyclic): step 1/1. It functions in the pathway amino-acid biosynthesis; L-arginine biosynthesis; N(2)-acetyl-L-ornithine from L-glutamate: step 1/4. Its function is as follows. Catalyzes two activities which are involved in the cyclic version of arginine biosynthesis: the synthesis of N-acetylglutamate from glutamate and acetyl-CoA as the acetyl donor, and of ornithine by transacetylation between N(2)-acetylornithine and glutamate. The protein is Arginine biosynthesis bifunctional protein ArgJ of Bordetella bronchiseptica (strain ATCC BAA-588 / NCTC 13252 / RB50) (Alcaligenes bronchisepticus).